A 583-amino-acid chain; its full sequence is Vivapain-1 (583 aa).

At 1–34 (MAQDIKIMNLTKSSLEALNRNQMLSKKSSRKILK) the chain is on the cytoplasmic side. The propeptide at 1-338 (MAQDIKIMNL…SSSGANLLAD (338 aa)) is activation peptide. A helical; Signal-anchor for type II membrane protein transmembrane segment spans residues 35–55 (ICMYAILTFAMCGVVLICLTA). Over 56-583 (MSNSDGSLTQ…IGVEVFYPIL (528 aa)) the chain is Lumenal. The span at 62 to 82 (SLTQSGSHNQSGSLKGLSSTP) shows a compositional bias: polar residues. 2 disordered regions span residues 62–83 (SLTQSGSHNQSGSLKGLSSTPG) and 104–125 (PHGNRDPTGDDVEKPADAALPN). Asn70 carries N-linked (GlcNAc...) asparagine glycosylation. The span at 106–119 (GNRDPTGDDVEKPA) shows a compositional bias: basic and acidic residues. Residues Asn195 and Asn272 are each glycosylated (N-linked (GlcNAc...) asparagine). Cystine bridges form between Cys360/Cys402, Cys395/Cys435, and Cys420/Cys440. Cys363 is a catalytic residue. An N-linked (GlcNAc...) asparagine glycan is attached at Asn381. N-linked (GlcNAc...) asparagine glycosylation is found at Asn486 and Asn494. An intrachain disulfide couples Cys489 to Cys572. Catalysis depends on residues His495 and Asn547.

Belongs to the peptidase C1 family.

The protein resides in the membrane. Cysteine protease. The protein is Vivapain-1 of Plasmodium vivax (strain Salvador I).